Consider the following 269-residue polypeptide: Basic leucine zipper 19 (269 aa).

Residues 140 to 196 enclose the bZIP domain; the sequence is DPKRVKRILANRQSAQRSRVRKLQYISELERSVTTLQMEVSALSPRVAFLDHQRSLL. The interval 142–161 is basic motif; the sequence is KRVKRILANRQSAQRSRVRK. The segment at 168–196 is leucine-zipper; that stretch reads LERSVTTLQMEVSALSPRVAFLDHQRSLL.

As to expression, expressed in roots and shoots.

It is found in the nucleus. Transcription regulator. This is Basic leucine zipper 19 (BZIP19) from Oryza sativa subsp. japonica (Rice).